A 553-amino-acid polypeptide reads, in one-letter code: Phenylalanine--tRNA ligase alpha subunit (553 aa).

Residues Thr400 and Phe479 each coordinate L-phenylalanine. Residue Glu481 participates in Mg(2+) binding.

This sequence belongs to the class-II aminoacyl-tRNA synthetase family. Phe-tRNA synthetase alpha subunit type 2 subfamily. In terms of assembly, tetramer of two alpha and two beta subunits. Mg(2+) is required as a cofactor.

It localises to the cytoplasm. It catalyses the reaction tRNA(Phe) + L-phenylalanine + ATP = L-phenylalanyl-tRNA(Phe) + AMP + diphosphate + H(+). The sequence is that of Phenylalanine--tRNA ligase alpha subunit from Treponema pallidum (strain Nichols).